A 252-amino-acid chain; its full sequence is Large ribosomal subunit protein uL4 (252 aa).

Belongs to the universal ribosomal protein uL4 family. Part of the 50S ribosomal subunit.

Its function is as follows. One of the primary rRNA binding proteins, this protein initially binds near the 5'-end of the 23S rRNA. It is important during the early stages of 50S assembly. It makes multiple contacts with different domains of the 23S rRNA in the assembled 50S subunit and ribosome. In terms of biological role, forms part of the polypeptide exit tunnel. In Methanocaldococcus jannaschii (strain ATCC 43067 / DSM 2661 / JAL-1 / JCM 10045 / NBRC 100440) (Methanococcus jannaschii), this protein is Large ribosomal subunit protein uL4.